A 68-amino-acid chain; its full sequence is Large ribosomal subunit protein uL29 (68 aa).

Belongs to the universal ribosomal protein uL29 family.

The chain is Large ribosomal subunit protein uL29 from Roseobacter denitrificans (strain ATCC 33942 / OCh 114) (Erythrobacter sp. (strain OCh 114)).